Reading from the N-terminus, the 784-residue chain is Toll-like receptor 2 (784 aa).

The signal sequence occupies residues 1 to 20; that stretch reads MPRALWPAWVWAIIILSMEG. Topologically, residues 21 to 587 are extracellular; sequence ASDKASSLSC…ARLSLSECHR (567 aa). C30 and C36 form a disulfide bridge. LRR repeat units lie at residues 54–77, 78–101, 102–125, 126–150, 151–175, 176–199, 200–223, 224–250, 251–278, 279–308, 309–337, 338–361, 362–388, 389–414, 415–437, 438–457, 458–478, 479–500, and 501–524; these read VKSL…RCVN, LKTL…HLRN, LEYL…SLYV, LKFL…HLPD, LRTL…GLTF, LEEL…SIQN, ISHL…IVSS, LDCL…MSTS, VKKL…YVSG, IVEV…HLGN, VETL…LTGK, VKRV…HLKS, LEYL…AWPF, LQTL…TLKN, LNNL…WPGK, MKQL…CLPQ, TLEI…ILPQ, LKEL…FLPV, and LSVM…SFQQ. N114 carries an N-linked (GlcNAc...) asparagine glycan. An N-linked (GlcNAc...) asparagine glycan is attached at N199. An intrachain disulfide couples C353 to C382. C432 and C454 are disulfide-bonded. N442 carries N-linked (GlcNAc...) asparagine glycosylation. The LRRCT domain occupies 525–579; it reads LKTLEAGGNNFICSCDFLSFTQGQQALGRVLVDWPDDYRCDSPSHVRGQRLQDAR. The chain crosses the membrane as a helical span at residues 588 to 608; sequence AAVVSAACCALFLFLLLTGVL. Residues 609-784 lie on the Cytoplasmic side of the membrane; the sequence is CHRFHGLWYM…WLNLRAAIRS (176 aa). Residues 639-782 form the TIR domain; the sequence is ICYDAFVSYS…GFWLNLRAAI (144 aa). Residue K754 forms a Glycyl lysine isopeptide (Lys-Gly) (interchain with G-Cter in ubiquitin) linkage. The short motif at 761 to 778 is the ATG16L1-binding motif element; it reads YLEWPLDETQQEGFWLNL.

This sequence belongs to the Toll-like receptor family. In terms of assembly, interacts with LY96, TLR1 and TLR6 (via extracellular domain). TLR2 seems to exist in heterodimers with either TLR1 or TLR6 before stimulation by the ligand. The heterodimers form bigger oligomers in response to their corresponding ligands as well as further heterotypic associations with other receptors such as CD14 and/or CD36. Binds MYD88 (via TIR domain). Interacts with TICAM1. Interacts with CNPY3. Interacts with ATG16L1. Interacts with PPP1R11. Interacts with TICAM2. Interacts with TIRAP. In terms of processing, ubiquitinated at Lys-754 by PPP1R11, leading to its degradation. Deubiquitinated by USP2. Glycosylation of Asn-442 is critical for secretion of the N-terminal ectodomain of TLR2.

It is found in the membrane. The protein localises to the cytoplasmic vesicle. It localises to the phagosome membrane. Its subcellular location is the membrane raft. Functionally, cooperates with LY96 to mediate the innate immune response to bacterial lipoproteins and other microbial cell wall components. Cooperates with TLR1 or TLR6 to mediate the innate immune response to bacterial lipoproteins or lipopeptides. Acts via MYD88 and TRAF6, leading to NF-kappa-B activation, cytokine secretion and the inflammatory response. May also promote apoptosis in response to lipoproteins. Forms activation clusters composed of several receptors depending on the ligand, these clusters trigger signaling from the cell surface and subsequently are targeted to the Golgi in a lipid-raft dependent pathway. Forms the cluster TLR2:TLR6:CD14:CD36 in response to diacylated lipopeptides and TLR2:TLR1:CD14 in response to triacylated lipopeptides. This Boselaphus tragocamelus (Nilgai) protein is Toll-like receptor 2 (TLR2).